Reading from the N-terminus, the 361-residue chain is UDP-N-acetylglucosamine--N-acetylmuramyl-(pentapeptide) pyrophosphoryl-undecaprenol N-acetylglucosamine transferase (361 aa).

UDP-N-acetyl-alpha-D-glucosamine-binding residues include S199 and Q290.

Belongs to the glycosyltransferase 28 family. MurG subfamily.

Its subcellular location is the cell membrane. The enzyme catalyses Mur2Ac(oyl-L-Ala-gamma-D-Glu-L-Lys-D-Ala-D-Ala)-di-trans,octa-cis-undecaprenyl diphosphate + UDP-N-acetyl-alpha-D-glucosamine = beta-D-GlcNAc-(1-&gt;4)-Mur2Ac(oyl-L-Ala-gamma-D-Glu-L-Lys-D-Ala-D-Ala)-di-trans,octa-cis-undecaprenyl diphosphate + UDP + H(+). Its pathway is cell wall biogenesis; peptidoglycan biosynthesis. Cell wall formation. Catalyzes the transfer of a GlcNAc subunit on undecaprenyl-pyrophosphoryl-MurNAc-pentapeptide (lipid intermediate I) to form undecaprenyl-pyrophosphoryl-MurNAc-(pentapeptide)GlcNAc (lipid intermediate II). This is UDP-N-acetylglucosamine--N-acetylmuramyl-(pentapeptide) pyrophosphoryl-undecaprenol N-acetylglucosamine transferase from Streptococcus mutans serotype c (strain ATCC 700610 / UA159).